We begin with the raw amino-acid sequence, 358 residues long: Transcription factor bHLH67 (358 aa).

Residues 125–176 (NMTLPSSTSSPLSAHSRRKRKINHLLPQEMTREKRKRRKTKPSKNNEEIENQ) form a disordered region. The span at 127-137 (TLPSSTSSPLS) shows a compositional bias: low complexity. Basic residues predominate over residues 157–166 (EKRKRRKTKP). The bHLH domain maps to 175–226 (NQRINHIAVERNRRRQMNEHINSLRALLPPSYIQRGDQASIVGGAINYVKVL).

Homodimer. In terms of tissue distribution, expressed constitutively in roots, leaves, stems, and flowers.

Its subcellular location is the nucleus. The chain is Transcription factor bHLH67 (BHLH67) from Arabidopsis thaliana (Mouse-ear cress).